The following is a 211-amino-acid chain: Shikimate kinase (211 aa).

Positions 1–23 are disordered; that stretch reads MNASANLCAASDNDPQPGDQEAA. Position 50–55 (50–55) interacts with ATP; it reads GAGKTT. Residue Thr-54 participates in Mg(2+) binding. Residues Asp-72, Arg-96, and Gly-118 each contribute to the substrate site. Residue Arg-156 coordinates ATP. Arg-175 is a binding site for substrate.

This sequence belongs to the shikimate kinase family. Monomer. Mg(2+) serves as cofactor.

It is found in the cytoplasm. The enzyme catalyses shikimate + ATP = 3-phosphoshikimate + ADP + H(+). It functions in the pathway metabolic intermediate biosynthesis; chorismate biosynthesis; chorismate from D-erythrose 4-phosphate and phosphoenolpyruvate: step 5/7. In terms of biological role, catalyzes the specific phosphorylation of the 3-hydroxyl group of shikimic acid using ATP as a cosubstrate. This chain is Shikimate kinase, found in Bordetella bronchiseptica (strain ATCC BAA-588 / NCTC 13252 / RB50) (Alcaligenes bronchisepticus).